The following is a 157-amino-acid chain: Protein Smg homolog (157 aa).

It belongs to the Smg family.

The polypeptide is Protein Smg homolog (Shewanella denitrificans (strain OS217 / ATCC BAA-1090 / DSM 15013)).